Here is a 547-residue protein sequence, read N- to C-terminus: MFS-type transporter ungB (547 aa).

14 helical membrane passes run 14–34 (LLVT…ETVL), 50–70 (DVGW…MAWG), 80–100 (WVFL…GVSP), 111–131 (IAGL…SNTI), 138–158 (IYLG…PVIG), 169–189 (WCFF…VFCL), 210–230 (LLGS…LEWG), 238–258 (SWRV…FAVV), 279–299 (LGLI…VYYL), 316–336 (LAIL…GILV), 343–363 (TPFL…LSSL), 366–386 (ASGL…IGLG), 392–412 (VVPS…TLCF), and 475–495 (AVSE…LGSA). A disordered region spans residues 503 to 547 (PGHKEATEKVEGEGQGQGQQQEQDQGQGWGEVGESHALAHPTADK). Residues 504-514 (GHKEATEKVEG) show a composition bias toward basic and acidic residues.

Belongs to the major facilitator superfamily. TCR/Tet family.

Its subcellular location is the membrane. Functionally, MFS-type transporter; part of the gene cluster that mediates the biosynthesis of the unguisins, gamma-aminobutyric acid (GABA)-containing fungal cyclic heptapeptides with the amino acid sequence cyclo-(D-Ala1-D-Val2-L-Phe3-D-Val4-D-Ala5-D-Trp6-GABA7) for unguisin A and cyclo-(D-Ala1-D-Val2-L-Leu3-D-Val4-D-Ala5-D-Trp6-GABA7) for unguisin B. May be involved in the secretion of unguisins. In Aspergillus violaceofuscus (strain CBS 115571), this protein is MFS-type transporter ungB.